Consider the following 147-residue polypeptide: Ribonuclease H (147 aa).

The 143-residue stretch at 3 to 145 (TEDRVEIYTD…ADQLANKGVE (143 aa)) folds into the RNase H type-1 domain. The Mg(2+) site is built by Asp-12, Glu-50, Asp-72, and Asp-137.

Belongs to the RNase H family. In terms of assembly, monomer. Mg(2+) is required as a cofactor.

Its subcellular location is the cytoplasm. The enzyme catalyses Endonucleolytic cleavage to 5'-phosphomonoester.. Functionally, endonuclease that specifically degrades the RNA of RNA-DNA hybrids. The protein is Ribonuclease H of Chromobacterium violaceum (strain ATCC 12472 / DSM 30191 / JCM 1249 / CCUG 213 / NBRC 12614 / NCIMB 9131 / NCTC 9757 / MK).